A 311-amino-acid polypeptide reads, in one-letter code: Chalcone synthase 4 (311 aa).

C164 is a catalytic residue.

This sequence belongs to the thiolase-like superfamily. Chalcone/stilbene synthases family.

The catalysed reaction is (E)-4-coumaroyl-CoA + 3 malonyl-CoA + 3 H(+) = 2',4,4',6'-tetrahydroxychalcone + 3 CO2 + 4 CoA. Its pathway is secondary metabolite biosynthesis; flavonoid biosynthesis. Functionally, the primary product of this enzyme is 4,2',4',6'-tetrahydroxychalcone (also termed naringenin-chalcone or chalcone) which can under specific conditions spontaneously isomerize into naringenin. In Trifolium subterraneum (Subterranean clover), this protein is Chalcone synthase 4 (CHS4).